Here is a 243-residue protein sequence, read N- to C-terminus: Protein-L-isoaspartate O-methyltransferase 2 (243 aa).

The segment at 21–42 (DACADRGHPSAERSTPETERRR) is disordered. The segment covering 23-42 (CADRGHPSAERSTPETERRR) has biased composition (basic and acidic residues). Ser-94 is a catalytic residue.

The protein belongs to the methyltransferase superfamily. L-isoaspartyl/D-aspartyl protein methyltransferase family.

The protein resides in the cytoplasm. It catalyses the reaction [protein]-L-isoaspartate + S-adenosyl-L-methionine = [protein]-L-isoaspartate alpha-methyl ester + S-adenosyl-L-homocysteine. In terms of biological role, catalyzes the methyl esterification of L-isoaspartyl residues in peptides and proteins that result from spontaneous decomposition of normal L-aspartyl and L-asparaginyl residues. It plays a role in the repair and/or degradation of damaged proteins. This chain is Protein-L-isoaspartate O-methyltransferase 2, found in Anaeromyxobacter sp. (strain Fw109-5).